The chain runs to 278 residues: Large ribosomal subunit protein uL2 (278 aa).

Positions 225 to 278 (MNPVDHPHGGGEGRTSGGRHPVTPWGKPTKGKKTRANKATDKYIVRSRHQKKKG) are disordered. The segment covering 269 to 278 (VRSRHQKKKG) has biased composition (basic residues).

The protein belongs to the universal ribosomal protein uL2 family. Part of the 50S ribosomal subunit. Forms a bridge to the 30S subunit in the 70S ribosome.

Functionally, one of the primary rRNA binding proteins. Required for association of the 30S and 50S subunits to form the 70S ribosome, for tRNA binding and peptide bond formation. It has been suggested to have peptidyltransferase activity; this is somewhat controversial. Makes several contacts with the 16S rRNA in the 70S ribosome. This chain is Large ribosomal subunit protein uL2, found in Parvibaculum lavamentivorans (strain DS-1 / DSM 13023 / NCIMB 13966).